The chain runs to 187 residues: Ribonuclease HII (187 aa).

The region spanning 1 to 187 is the RNase H type-2 domain; that stretch reads MICGTDEAGR…NPVKRLLANL (187 aa). A divalent metal cation contacts are provided by aspartate 6, glutamate 7, and aspartate 98.

It belongs to the RNase HII family. Mn(2+) serves as cofactor. Requires Mg(2+) as cofactor.

The protein localises to the cytoplasm. It carries out the reaction Endonucleolytic cleavage to 5'-phosphomonoester.. Its function is as follows. Endonuclease that specifically degrades the RNA of RNA-DNA hybrids. This is Ribonuclease HII from Idiomarina loihiensis (strain ATCC BAA-735 / DSM 15497 / L2-TR).